The following is a 510-amino-acid chain: Flavonoid 3',5'-hydroxylase (510 aa).

Cys-447 contacts heme.

Belongs to the cytochrome P450 family. Heme is required as a cofactor.

It carries out the reaction a 3',5'-unsubstituted flavanone + 2 reduced [NADPH--hemoprotein reductase] + 2 O2 = a 3',5'-dihydroxyflavanone + 2 oxidized [NADPH--hemoprotein reductase] + 2 H2O + 2 H(+). It participates in pigment biosynthesis; anthocyanin biosynthesis. Catalyzes the 3'5'-hydroxylation of naringenin and eriodictyol to form 5,7,3,'4',5'-pentahydroxyflavanone and 3',5'-hydroxylation of dihydrokaempferol and dihydroquercetin to form dihydromyricetin. This chain is Flavonoid 3',5'-hydroxylase (CYP75A7), found in Eustoma exaltatum subsp. russellianum (Bluebells).